The chain runs to 247 residues: PF03932 family protein CutC (247 aa).

Belongs to the CutC family.

Its subcellular location is the cytoplasm. This Klebsiella pneumoniae (strain 342) protein is PF03932 family protein CutC.